The following is a 375-amino-acid chain: F-box/kelch-repeat protein At4g39240 (375 aa).

The segment covering 1–15 (MPFSAASSSSVSSIA) has biased composition (low complexity). The tract at residues 1-27 (MPFSAASSSSVSSIAEEPPPKKQHDPS) is disordered. In terms of domain architecture, F-box spans 31 to 77 (SSYLLLLPDEIILNCLARLPKCYYPVISLVSKTFRRLIASPEIYVER). Kelch repeat units follow at residues 140–186 (EIYV…FFDG), 187–232 (KLYV…RSFA), and 275–321 (KIYT…GNLA).

In Arabidopsis thaliana (Mouse-ear cress), this protein is F-box/kelch-repeat protein At4g39240.